A 349-amino-acid polypeptide reads, in one-letter code: Phosphoribosylformylglycinamidine cyclo-ligase (349 aa).

It belongs to the AIR synthase family.

Its subcellular location is the cytoplasm. The catalysed reaction is 2-formamido-N(1)-(5-O-phospho-beta-D-ribosyl)acetamidine + ATP = 5-amino-1-(5-phospho-beta-D-ribosyl)imidazole + ADP + phosphate + H(+). It participates in purine metabolism; IMP biosynthesis via de novo pathway; 5-amino-1-(5-phospho-D-ribosyl)imidazole from N(2)-formyl-N(1)-(5-phospho-D-ribosyl)glycinamide: step 2/2. The polypeptide is Phosphoribosylformylglycinamidine cyclo-ligase (Bordetella pertussis (strain Tohama I / ATCC BAA-589 / NCTC 13251)).